The sequence spans 290 residues: MIHGTTVWPSPAKLNLFLYITGRRANGYHDLQTLFQFLDHGDELTITANNSGNITLSPALADVALEDNLIYKAAMALKNAAQSPLGADIQLHKVLPMGGGIGGGSSNAATTLVALNYLWQTGLSDDQLAEIGLALGADVPVFTRGFAAFAEGVGEELSAVEPEEKWYLVVRPAVSIATKDIFTHPQLMRNTPKRDLASLLTTPYENDCEKIVRSLYPEVDKQLSWLLQYAPSRLTGTGSCVFAEFSSRKDAQAVFAQLSDNVLAFVAQGRNVSPLRKTLADYQSAKIRPY.

Lys13 is a catalytic residue. 96 to 106 (PMGGGIGGGSS) serves as a coordination point for ATP. Asp138 is an active-site residue.

This sequence belongs to the GHMP kinase family. IspE subfamily.

The catalysed reaction is 4-CDP-2-C-methyl-D-erythritol + ATP = 4-CDP-2-C-methyl-D-erythritol 2-phosphate + ADP + H(+). The protein operates within isoprenoid biosynthesis; isopentenyl diphosphate biosynthesis via DXP pathway; isopentenyl diphosphate from 1-deoxy-D-xylulose 5-phosphate: step 3/6. Its function is as follows. Catalyzes the phosphorylation of the position 2 hydroxy group of 4-diphosphocytidyl-2C-methyl-D-erythritol. This chain is 4-diphosphocytidyl-2-C-methyl-D-erythritol kinase, found in Vibrio cholerae serotype O1 (strain ATCC 39541 / Classical Ogawa 395 / O395).